A 480-amino-acid polypeptide reads, in one-letter code: Adenosylhomocysteinase (480 aa).

The substrate site is built by Thr63, Asp142, and Glu203. 204–206 (TTT) contributes to the NAD(+) binding site. Substrate contacts are provided by Lys233 and Asp237. NAD(+)-binding positions include Asn238, 267 to 272 (GYGDVG), Glu290, Asn325, 346 to 348 (IGH), and Asn394.

The protein belongs to the adenosylhomocysteinase family. NAD(+) is required as a cofactor.

The protein localises to the cytoplasm. It catalyses the reaction S-adenosyl-L-homocysteine + H2O = L-homocysteine + adenosine. It functions in the pathway amino-acid biosynthesis; L-homocysteine biosynthesis; L-homocysteine from S-adenosyl-L-homocysteine: step 1/1. May play a key role in the regulation of the intracellular concentration of adenosylhomocysteine. The chain is Adenosylhomocysteinase from Xylella fastidiosa (strain M12).